Here is a 435-residue protein sequence, read N- to C-terminus: NADH-quinone oxidoreductase subunit D (435 aa).

The protein belongs to the complex I 49 kDa subunit family. NDH-1 is composed of 14 different subunits. Subunits NuoB, C, D, E, F, and G constitute the peripheral sector of the complex.

The protein resides in the cell inner membrane. It carries out the reaction a quinone + NADH + 5 H(+)(in) = a quinol + NAD(+) + 4 H(+)(out). NDH-1 shuttles electrons from NADH, via FMN and iron-sulfur (Fe-S) centers, to quinones in the respiratory chain. The immediate electron acceptor for the enzyme in this species is believed to be ubiquinone. Couples the redox reaction to proton translocation (for every two electrons transferred, four hydrogen ions are translocated across the cytoplasmic membrane), and thus conserves the redox energy in a proton gradient. The protein is NADH-quinone oxidoreductase subunit D of Xylella fastidiosa (strain 9a5c).